Reading from the N-terminus, the 957-residue chain is MTQTLSQLENSGAFIERHIGPDAAQQQEMLNAVGAQSLNALTGQIVPKDIQLATPPQVGAPATEYAALAELKAIASRNKRFTSYIGMGYTAVQLPPVILRNMLENPGWYTAYTPYQPEVSQGRLEALLNFQQVTLDLTGLDMASASLLDEATAAAEAMAMAKRVSKLKNANRFFVASDVHPQTLDVVRTRAETFGFEVIVDDAQKVLDHQDVFGVLLQQVGTTGEIHDYTALISELKSRKIVVSVAADIMALVLLTAPGKQGADIVFGSAQRFGVPMGYGGPHAAFFAAKDEYKRSMPGRIIGVSKDAAGNTALRMAMQTREQHIRREKANSNICTSQVLLANIASLYAVYHGPVGLKRIANRIHRLTDILAAGLQQKGLKLRHAHYFDTLCVEVADKAGVLARAEAAEINLRSDILNAVGITLDETTTRENVMQLFSVLLGDNHGLDIDTLDKDVAHDSRSIQPAMLRDDEILTHPVFNRYHSETEMMRYMHSLERKDLALNQAMIPLGSCTMKLNAAAEMIPITWSEFAELHPFCPPEQAEGYQQMIAQLADWLVKLTGYDAVCMQPNSGAQGEYAGLLAIRHYHESRNEGHRDICLIPASAHGTNPASAHMAGMQVVVVACDKNGNIDLADLRAKAEQAGDNLSCIMVTYPSTHGVYEETIREVCEVVHQFGGQVYLDGANMNAQVGITSPGFIGADVSHLNLHKTFCIPHGGGGPGMGPIGVKAHLAPFVPGHSVVQIEGMLTRQGAVSAAPFGSASILPISWMYIRMMGAEGLKKASQVAILNANYIASRLQDAFPVLYTGRDGRVAHECILDIRPLKEETGISELDIAKRLIDYGFHAPTMSFPVAGTLMVEPTESESKVELDRFIDAMLAIRAEIDQVKAGVWPLEDNPLVNAPHIQSELVAEWAHPYSREVAVFPAGVADKYWPTVKRLDDVYGDRNLFCSCVPISEYQ.

Position 708 is an N6-(pyridoxal phosphate)lysine (K708).

It belongs to the GcvP family. In terms of assembly, the glycine cleavage system is composed of four proteins: P, T, L and H. Requires pyridoxal 5'-phosphate as cofactor.

The catalysed reaction is N(6)-[(R)-lipoyl]-L-lysyl-[glycine-cleavage complex H protein] + glycine + H(+) = N(6)-[(R)-S(8)-aminomethyldihydrolipoyl]-L-lysyl-[glycine-cleavage complex H protein] + CO2. Functionally, the glycine cleavage system catalyzes the degradation of glycine. The P protein binds the alpha-amino group of glycine through its pyridoxal phosphate cofactor; CO(2) is released and the remaining methylamine moiety is then transferred to the lipoamide cofactor of the H protein. The polypeptide is Glycine dehydrogenase (decarboxylating) (Escherichia coli O17:K52:H18 (strain UMN026 / ExPEC)).